The chain runs to 355 residues: Peptide chain release factor 1 (355 aa).

At Q230 the chain carries N5-methylglutamine.

The protein belongs to the prokaryotic/mitochondrial release factor family. In terms of processing, methylated by PrmC. Methylation increases the termination efficiency of RF1.

The protein resides in the cytoplasm. Functionally, peptide chain release factor 1 directs the termination of translation in response to the peptide chain termination codons UAG and UAA. The protein is Peptide chain release factor 1 of Geobacter sulfurreducens (strain ATCC 51573 / DSM 12127 / PCA).